The chain runs to 503 residues: Probable cytosol aminopeptidase (503 aa).

Residues Lys270 and Asp275 each coordinate Mn(2+). Lys282 is a catalytic residue. Residues Asp293, Asp352, and Glu354 each coordinate Mn(2+). Arg356 is an active-site residue.

Belongs to the peptidase M17 family. It depends on Mn(2+) as a cofactor.

The protein localises to the cytoplasm. It catalyses the reaction Release of an N-terminal amino acid, Xaa-|-Yaa-, in which Xaa is preferably Leu, but may be other amino acids including Pro although not Arg or Lys, and Yaa may be Pro. Amino acid amides and methyl esters are also readily hydrolyzed, but rates on arylamides are exceedingly low.. The catalysed reaction is Release of an N-terminal amino acid, preferentially leucine, but not glutamic or aspartic acids.. Functionally, presumably involved in the processing and regular turnover of intracellular proteins. Catalyzes the removal of unsubstituted N-terminal amino acids from various peptides. This chain is Probable cytosol aminopeptidase, found in Sodalis glossinidius (strain morsitans).